The primary structure comprises 162 residues: B-box zinc finger protein 23 (162 aa).

Residues Cys5, Cys8, Cys28, His33, Cys63, Cys66, Cys86, and His91 each coordinate Zn(2+). The segment at 5 to 47 (CEVCEKAEAEVLCCSDEAVLCKPCDIKVHEANKLFQRHHRVAL) adopts a B box-type 1; atypical zinc-finger fold. The B box-type 2; atypical zinc finger occupies 63–101 (CDICQERKGYFFCLEDRAMLCNDCDEAIHTCNSHQRFLL). The tract at residues 137–162 (QYSSEETEAGNSGEIVHKNPSVILSP) is disordered.

It localises to the nucleus. Functionally, probable transcription factor that may be involved in seedling photomorphogenesis. The chain is B-box zinc finger protein 23 from Arabidopsis thaliana (Mouse-ear cress).